Here is a 354-residue protein sequence, read N- to C-terminus: Holliday junction branch migration complex subunit RuvB (354 aa).

Residues 1–10 (MAIKRNQGSN) show a composition bias toward polar residues. Positions 1-36 (MAIKRNQGSNPKPEKKERLTKAETHQEQDNLEESIR) are disordered. Residues 12–36 (KPEKKERLTKAETHQEQDNLEESIR) show a composition bias toward basic and acidic residues. The segment at 13–196 (PEKKERLTKA…FGLIQRLKFY (184 aa)) is large ATPase domain (RuvB-L). ATP is bound by residues Ile35, Arg36, Gly77, Lys80, Thr81, Thr82, 143–145 (EDY), Arg186, Tyr196, and Arg233. Position 81 (Thr81) interacts with Mg(2+). Residues 197 to 267 (EPEELALIIK…LAAEALDIYQ (71 aa)) are small ATPAse domain (RuvB-S). Positions 270–354 (PQGLDWTDRL…EEQLSIFSEQ (85 aa)) are head domain (RuvB-H). Residues Arg325 and Arg330 each coordinate DNA.

It belongs to the RuvB family. As to quaternary structure, homohexamer. Forms an RuvA(8)-RuvB(12)-Holliday junction (HJ) complex. HJ DNA is sandwiched between 2 RuvA tetramers; dsDNA enters through RuvA and exits via RuvB. An RuvB hexamer assembles on each DNA strand where it exits the tetramer. Each RuvB hexamer is contacted by two RuvA subunits (via domain III) on 2 adjacent RuvB subunits; this complex drives branch migration. In the full resolvosome a probable DNA-RuvA(4)-RuvB(12)-RuvC(2) complex forms which resolves the HJ.

It is found in the cytoplasm. The catalysed reaction is ATP + H2O = ADP + phosphate + H(+). Functionally, the RuvA-RuvB-RuvC complex processes Holliday junction (HJ) DNA during genetic recombination and DNA repair, while the RuvA-RuvB complex plays an important role in the rescue of blocked DNA replication forks via replication fork reversal (RFR). RuvA specifically binds to HJ cruciform DNA, conferring on it an open structure. The RuvB hexamer acts as an ATP-dependent pump, pulling dsDNA into and through the RuvAB complex. RuvB forms 2 homohexamers on either side of HJ DNA bound by 1 or 2 RuvA tetramers; 4 subunits per hexamer contact DNA at a time. Coordinated motions by a converter formed by DNA-disengaged RuvB subunits stimulates ATP hydrolysis and nucleotide exchange. Immobilization of the converter enables RuvB to convert the ATP-contained energy into a lever motion, pulling 2 nucleotides of DNA out of the RuvA tetramer per ATP hydrolyzed, thus driving DNA branch migration. The RuvB motors rotate together with the DNA substrate, which together with the progressing nucleotide cycle form the mechanistic basis for DNA recombination by continuous HJ branch migration. Branch migration allows RuvC to scan DNA until it finds its consensus sequence, where it cleaves and resolves cruciform DNA. This Crocosphaera subtropica (strain ATCC 51142 / BH68) (Cyanothece sp. (strain ATCC 51142)) protein is Holliday junction branch migration complex subunit RuvB.